The following is a 272-amino-acid chain: Tryptophan synthase alpha chain (272 aa).

Residues Glu49 and Glu60 each act as proton acceptor in the active site.

This sequence belongs to the TrpA family. As to quaternary structure, tetramer of two alpha and two beta chains.

It catalyses the reaction (1S,2R)-1-C-(indol-3-yl)glycerol 3-phosphate + L-serine = D-glyceraldehyde 3-phosphate + L-tryptophan + H2O. It participates in amino-acid biosynthesis; L-tryptophan biosynthesis; L-tryptophan from chorismate: step 5/5. Functionally, the alpha subunit is responsible for the aldol cleavage of indoleglycerol phosphate to indole and glyceraldehyde 3-phosphate. This is Tryptophan synthase alpha chain from Legionella pneumophila (strain Paris).